Reading from the N-terminus, the 819-residue chain is Zinc finger protein with KRAB and SCAN domains 5 (819 aa).

One can recognise an SCAN box domain in the interval 51–132 (QRFKHFQYHE…AVIESIQREL (82 aa)). Residues Lys-214, Lys-246, and Lys-302 each participate in a glycyl lysine isopeptide (Lys-Gly) (interchain with G-Cter in SUMO2) cross-link. The KRAB domain occupies 216 to 287 (EDVADVAVSF…HWVAAERTEK (72 aa)). 2 disordered regions span residues 236 to 263 (SQKS…KEGN) and 283 to 340 (ERTE…GERG). Over residues 240–249 (LGRDSRKEDC) the composition is skewed to basic and acidic residues. Over residues 329–340 (VNRKQKSNGERG) the composition is skewed to basic and acidic residues. C2H2-type zinc fingers lie at residues 341 to 363 (HRCG…RRIH), 369 to 391 (FKCG…QRVH), 397 to 419 (YKCQ…HSVH), 425 to 447 (YGCN…LKRH), 540 to 562 (HQCN…RRIH), 568 to 590 (FRCE…HRVH), 596 to 618 (YACH…QSVH), 624 to 646 (FKCN…LRLH), and 652 to 674 (HQCH…QVLH). Residue Lys-700 forms a Glycyl lysine isopeptide (Lys-Gly) (interchain with G-Cter in SUMO2) linkage. C2H2-type zinc fingers lie at residues 708-730 (YQCD…YRTH), 764-786 (HQCN…QRIH), and 792-814 (LQCK…LRSH). A Glycyl lysine isopeptide (Lys-Gly) (interchain with G-Cter in SUMO2) cross-link involves residue Lys-776.

Belongs to the krueppel C2H2-type zinc-finger protein family. Testis specific.

It is found in the nucleus. Functionally, may be involved in transcriptional regulation. This is Zinc finger protein with KRAB and SCAN domains 5 (Zkscan5) from Mus musculus (Mouse).